A 171-amino-acid chain; its full sequence is Endoribonuclease YbeY (171 aa).

Zn(2+) is bound by residues His-126, His-130, and His-136.

The protein belongs to the endoribonuclease YbeY family. It depends on Zn(2+) as a cofactor.

It localises to the cytoplasm. In terms of biological role, single strand-specific metallo-endoribonuclease involved in late-stage 70S ribosome quality control and in maturation of the 3' terminus of the 16S rRNA. The polypeptide is Endoribonuclease YbeY (Rhizobium etli (strain CIAT 652)).